The primary structure comprises 71 residues: Small ribosomal subunit protein eS17 (71 aa).

It belongs to the eukaryotic ribosomal protein eS17 family.

In Pyrobaculum neutrophilum (strain DSM 2338 / JCM 9278 / NBRC 100436 / V24Sta) (Thermoproteus neutrophilus), this protein is Small ribosomal subunit protein eS17.